Here is a 503-residue protein sequence, read N- to C-terminus: Probable cytosol aminopeptidase (503 aa).

Residues K270 and D275 each coordinate Mn(2+). Residue K282 is part of the active site. Residues D293, D352, and E354 each coordinate Mn(2+). R356 is an active-site residue.

It belongs to the peptidase M17 family. Requires Mn(2+) as cofactor.

It is found in the cytoplasm. The catalysed reaction is Release of an N-terminal amino acid, Xaa-|-Yaa-, in which Xaa is preferably Leu, but may be other amino acids including Pro although not Arg or Lys, and Yaa may be Pro. Amino acid amides and methyl esters are also readily hydrolyzed, but rates on arylamides are exceedingly low.. It carries out the reaction Release of an N-terminal amino acid, preferentially leucine, but not glutamic or aspartic acids.. Presumably involved in the processing and regular turnover of intracellular proteins. Catalyzes the removal of unsubstituted N-terminal amino acids from various peptides. This Salmonella typhi protein is Probable cytosol aminopeptidase.